The following is a 271-amino-acid chain: Phosphonates import ATP-binding protein PhnC 2 (271 aa).

Positions L2–E246 constitute an ABC transporter domain. G35 to S42 is an ATP binding site. Residues R243–P254 show a composition bias toward basic and acidic residues. Positions R243–D271 are disordered.

This sequence belongs to the ABC transporter superfamily. Phosphonates importer (TC 3.A.1.9.1) family. In terms of assembly, the complex is composed of two ATP-binding proteins (PhnC), two transmembrane proteins (PhnE) and a solute-binding protein (PhnD).

It is found in the cell membrane. The catalysed reaction is phosphonate(out) + ATP + H2O = phosphonate(in) + ADP + phosphate + H(+). In terms of biological role, part of the ABC transporter complex PhnCDE involved in phosphonates import. Responsible for energy coupling to the transport system. This chain is Phosphonates import ATP-binding protein PhnC 2, found in Haloarcula marismortui (strain ATCC 43049 / DSM 3752 / JCM 8966 / VKM B-1809) (Halobacterium marismortui).